The chain runs to 292 residues: Tetratricopeptide repeat protein 1 (292 aa).

The tract at residues 20-125 (TDPQEAECLH…SSRLKEEGNE (106 aa)) is disordered. 2 stretches are compositionally biased toward basic and acidic residues: residues 36 to 49 (KEQH…KDVD) and 75 to 85 (GADKLENKPED). Over residues 86–98 (DMNPSELDEEYLM) the composition is skewed to acidic residues. At serine 90 the chain carries Phosphoserine. Over residues 99-125 (ELEKNMPDEEKKRRREESSRLKEEGNE) the composition is skewed to basic and acidic residues. 3 TPR repeats span residues 116–149 (SSRL…CPSC), 155–188 (SVLF…NPSY), and 189–222 (IRAI…DPSV).

In terms of assembly, interacts with the GAP domain of NF1. Interacts (via TPR repeats) with HSP90AA1 and HSPA8.

The polypeptide is Tetratricopeptide repeat protein 1 (TTC1) (Bos taurus (Bovine)).